Here is a 430-residue protein sequence, read N- to C-terminus: Tol-Pal system protein TolB (430 aa).

The first 21 residues, 1 to 21 (MKQALRVAFGFLMLWAAVLHA), serve as a signal peptide directing secretion.

The protein belongs to the TolB family. In terms of assembly, the Tol-Pal system is composed of five core proteins: the inner membrane proteins TolA, TolQ and TolR, the periplasmic protein TolB and the outer membrane protein Pal. They form a network linking the inner and outer membranes and the peptidoglycan layer.

It is found in the periplasm. Functionally, part of the Tol-Pal system, which plays a role in outer membrane invagination during cell division and is important for maintaining outer membrane integrity. TolB occupies a key intermediary position in the Tol-Pal system because it communicates directly with both membrane-embedded components, Pal in the outer membrane and TolA in the inner membrane. The protein is Tol-Pal system protein TolB of Salmonella typhi.